The primary structure comprises 258 residues: Tryptophan synthase alpha chain (258 aa).

Active-site proton acceptor residues include E47 and D58.

This sequence belongs to the TrpA family. In terms of assembly, tetramer of two alpha and two beta chains.

It catalyses the reaction (1S,2R)-1-C-(indol-3-yl)glycerol 3-phosphate + L-serine = D-glyceraldehyde 3-phosphate + L-tryptophan + H2O. It participates in amino-acid biosynthesis; L-tryptophan biosynthesis; L-tryptophan from chorismate: step 5/5. In terms of biological role, the alpha subunit is responsible for the aldol cleavage of indoleglycerol phosphate to indole and glyceraldehyde 3-phosphate. The sequence is that of Tryptophan synthase alpha chain from Bacillus anthracis (strain CDC 684 / NRRL 3495).